Consider the following 129-residue polypeptide: uncharacterized protein (129 aa).

Residues 1 to 129 (MGRMASPLRS…PARQSARMAR (129 aa)) are disordered. The segment covering 18–46 (ESTRHKETSTVRVETSSHREETSSHRVET) has biased composition (basic and acidic residues). Low complexity predominate over residues 47 to 59 (SSRQVRTSSRQVE). The segment covering 70–97 (LTPSTKRLPQFLEVSSQHVETSSQCTET) has biased composition (polar residues).

This is an uncharacterized protein from Mus musculus (Mouse).